The following is a 412-amino-acid chain: Multifunctional CCA protein (412 aa).

Glycine 8 and arginine 11 together coordinate ATP. 2 residues coordinate CTP: glycine 8 and arginine 11. Positions 21 and 23 each coordinate Mg(2+). Arginine 91, arginine 137, and arginine 140 together coordinate ATP. CTP-binding residues include arginine 91, arginine 137, and arginine 140. An HD domain is found at 228–329 (TGIHTLMTLS…VKLFDSIDAW (102 aa)).

This sequence belongs to the tRNA nucleotidyltransferase/poly(A) polymerase family. Bacterial CCA-adding enzyme type 1 subfamily. In terms of assembly, monomer. Can also form homodimers and oligomers. It depends on Mg(2+) as a cofactor. The cofactor is Ni(2+).

It carries out the reaction a tRNA precursor + 2 CTP + ATP = a tRNA with a 3' CCA end + 3 diphosphate. The catalysed reaction is a tRNA with a 3' CCA end + 2 CTP + ATP = a tRNA with a 3' CCACCA end + 3 diphosphate. Catalyzes the addition and repair of the essential 3'-terminal CCA sequence in tRNAs without using a nucleic acid template. Adds these three nucleotides in the order of C, C, and A to the tRNA nucleotide-73, using CTP and ATP as substrates and producing inorganic pyrophosphate. tRNA 3'-terminal CCA addition is required both for tRNA processing and repair. Also involved in tRNA surveillance by mediating tandem CCA addition to generate a CCACCA at the 3' terminus of unstable tRNAs. While stable tRNAs receive only 3'-terminal CCA, unstable tRNAs are marked with CCACCA and rapidly degraded. The chain is Multifunctional CCA protein from Escherichia coli O157:H7.